A 349-amino-acid polypeptide reads, in one-letter code: Glycerol-3-phosphate dehydrogenase [NAD(+)], cytoplasmic (349 aa).

An NAD(+)-binding site is contributed by 10-15 (GSGNWG). Residue K120 participates in substrate binding. Residue A153 coordinates NAD(+). Residue S154 is modified to Phosphoserine. K204 serves as the catalytic Proton acceptor. R269 serves as a coordination point for NAD(+). 269–270 (RN) is a substrate binding site. Position 289 is an N6-succinyllysine (K289). 2 residues coordinate NAD(+): K296 and Q298. Y326 is modified (phosphotyrosine).

Belongs to the NAD-dependent glycerol-3-phosphate dehydrogenase family. In terms of assembly, homodimer.

The protein resides in the cytoplasm. It carries out the reaction sn-glycerol 3-phosphate + NAD(+) = dihydroxyacetone phosphate + NADH + H(+). In terms of biological role, has glycerol-3-phosphate dehydrogenase activity. The chain is Glycerol-3-phosphate dehydrogenase [NAD(+)], cytoplasmic from Rattus norvegicus (Rat).